The sequence spans 106 residues: A-type ATP synthase subunit F (106 aa).

The protein belongs to the V-ATPase F subunit family. As to quaternary structure, has multiple subunits with at least A(3), B(3), C, D, E, F, H, I and proteolipid K(x).

The protein localises to the cell membrane. In terms of biological role, component of the A-type ATP synthase that produces ATP from ADP in the presence of a proton gradient across the membrane. This Haloferax volcanii (strain ATCC 29605 / DSM 3757 / JCM 8879 / NBRC 14742 / NCIMB 2012 / VKM B-1768 / DS2) (Halobacterium volcanii) protein is A-type ATP synthase subunit F.